The chain runs to 88 residues: FXYD domain-containing ion transport regulator 3 (88 aa).

Residues 1-20 constitute a signal peptide (not cleaved); sequence MQEVVLSLLVLLAGLPTLDA. At 1 to 38 the chain is on the extracellular side; sequence MQEVVLSLLVLLAGLPTLDANDPENKNDPFYYDWYSLR. A helical membrane pass occupies residues 39-59; sequence VGGLICAGILCALGIIVLMSG. Topologically, residues 60 to 88 are cytoplasmic; that stretch reads KCKCKFRQKPSHRPGEGPPLITPGSAHNC. Residues 67-88 form a disordered region; the sequence is QKPSHRPGEGPPLITPGSAHNC.

The protein belongs to the FXYD family. As to quaternary structure, regulatory subunit of the sodium/potassium-transporting ATPase which is composed of a catalytic alpha subunit, a non-catalytic beta subunit and an additional regulatory subunit. Interacts with catalytic alpha subunit ATP1A1. Also interacts with non-catalytic beta subunit ATP1B1. Interacts with the ATP1A1-ATP1B1, ATP1A2-ATP1B1 and ATP1A3-ATP1B1 NKA isozymes. Post-translationally, glutathionylated. Expressed at high levels in heart, skeletal muscle and liver with low levels of expression in breast, brain, lung, stomach and colon. In the gastric gland, mainly expressed in the mucus cells forming the upper part of the gland and is absent from the parietal cells.

The protein localises to the cell membrane. Functionally, associates with and regulates the activity of the sodium/potassium-transporting ATPase (NKA) which transports Na(+) out of the cell and K(+) into the cell. Reduces glutathionylation of the NKA beta-1 subunit ATP1B1, thus reversing glutathionylation-mediated inhibition of ATP1B1. Induces a hyperpolarization-activated chloride current when expressed in Xenopus oocytes. In Mus musculus (Mouse), this protein is FXYD domain-containing ion transport regulator 3 (Fxyd3).